The sequence spans 395 residues: Trans-2-enoyl-CoA reductase [NADH] (395 aa).

Residues glycine 47–tyrosine 52, phenylalanine 73–glutamate 74, aspartate 110–alanine 111, and leucine 138–alanine 139 each bind NAD(+). A substrate-binding site is contributed by tyrosine 224. Tyrosine 234 acts as the Proton donor in catalysis. Residues lysine 243 and valine 272 to threonine 274 contribute to the NAD(+) site.

This sequence belongs to the TER reductase family. Monomer.

It carries out the reaction a 2,3-saturated acyl-CoA + NAD(+) = a (2E)-enoyl-CoA + NADH + H(+). It functions in the pathway lipid metabolism; fatty acid biosynthesis. Involved in the fatty acid synthesis (FAS II). Catalyzes the reduction of a carbon-carbon double bond in an enoyl moiety that is covalently linked to a coenzyme A (CoA). The protein is Trans-2-enoyl-CoA reductase [NADH] of Ruminiclostridium cellulolyticum (strain ATCC 35319 / DSM 5812 / JCM 6584 / H10) (Clostridium cellulolyticum).